The chain runs to 125 residues: Secreted RxLR effector protein 22 (125 aa).

The N-terminal stretch at 1–26 (MRLIYSALVTAAAMVAISNGSTPARG) is a signal peptide. Residues 21–66 (STPARGNEVETRSLRGGNEVDSSMSDDGERAARGGGRVRSQASGVT) form a disordered region. A RxLR-dEER motif is present at residues 32–50 (RSLRGGNEVDSSMSDDGER).

Belongs to the RxLR effector family.

It localises to the secreted. The protein resides in the host nucleus. Effector that acts as a broad suppressor of cell death to interrupt plant immunity. Inhibits cell death induced by cell death-inducing proteins, including the PAMP elicitor INF1 from P.infestans. The polypeptide is Secreted RxLR effector protein 22 (Plasmopara viticola (Downy mildew of grapevine)).